The primary structure comprises 460 residues: uncharacterized protein (460 aa).

The 59-residue stretch at 5-63 (TWHQGELIEVAIADLSDTGDGVGRFAERVVFVPDTVPGDRVLVRLLHVKPNYAHGKLHQ) folds into the TRAM domain. Cys-76, Cys-82, Cys-85, and Cys-164 together coordinate [4Fe-4S] cluster. 4 residues coordinate S-adenosyl-L-methionine: Gln-288, Tyr-317, Glu-338, and Asp-383. The active-site Nucleophile is the Cys-410.

It belongs to the class I-like SAM-binding methyltransferase superfamily. RNA M5U methyltransferase family.

This is an uncharacterized protein from Nostoc sp. (strain PCC 7120 / SAG 25.82 / UTEX 2576).